The chain runs to 639 residues: Elongation factor 4 (639 aa).

The tr-type G domain occupies 39-221 (TMIRNFCIIA…EIVRRVPAPV (183 aa)). GTP is bound by residues 51 to 56 (DHGKST) and 168 to 171 (NKID).

Belongs to the TRAFAC class translation factor GTPase superfamily. Classic translation factor GTPase family. LepA subfamily.

It localises to the cell membrane. It catalyses the reaction GTP + H2O = GDP + phosphate + H(+). Required for accurate and efficient protein synthesis under certain stress conditions. May act as a fidelity factor of the translation reaction, by catalyzing a one-codon backward translocation of tRNAs on improperly translocated ribosomes. Back-translocation proceeds from a post-translocation (POST) complex to a pre-translocation (PRE) complex, thus giving elongation factor G a second chance to translocate the tRNAs correctly. Binds to ribosomes in a GTP-dependent manner. This chain is Elongation factor 4, found in Frankia casuarinae (strain DSM 45818 / CECT 9043 / HFP020203 / CcI3).